Reading from the N-terminus, the 340-residue chain is Phenylalanine--tRNA ligase alpha subunit (340 aa).

Position 251 (glutamate 251) interacts with Mg(2+).

This sequence belongs to the class-II aminoacyl-tRNA synthetase family. Phe-tRNA synthetase alpha subunit type 1 subfamily. As to quaternary structure, tetramer of two alpha and two beta subunits. Mg(2+) is required as a cofactor.

The protein localises to the cytoplasm. The catalysed reaction is tRNA(Phe) + L-phenylalanine + ATP = L-phenylalanyl-tRNA(Phe) + AMP + diphosphate + H(+). This Porphyromonas gingivalis (strain ATCC 33277 / DSM 20709 / CIP 103683 / JCM 12257 / NCTC 11834 / 2561) protein is Phenylalanine--tRNA ligase alpha subunit.